A 378-amino-acid chain; its full sequence is Erythronate-4-phosphate dehydrogenase (378 aa).

2 residues coordinate substrate: Ser45 and Thr66. NAD(+) contacts are provided by Asp146 and Thr175. Residue Arg208 is part of the active site. Asp232 provides a ligand contact to NAD(+). Residue Glu237 is part of the active site. His254 serves as the catalytic Proton donor. Residue Gly257 participates in NAD(+) binding. Substrate is bound at residue Tyr258.

The protein belongs to the D-isomer specific 2-hydroxyacid dehydrogenase family. PdxB subfamily. As to quaternary structure, homodimer.

The protein resides in the cytoplasm. It catalyses the reaction 4-phospho-D-erythronate + NAD(+) = (R)-3-hydroxy-2-oxo-4-phosphooxybutanoate + NADH + H(+). Its pathway is cofactor biosynthesis; pyridoxine 5'-phosphate biosynthesis; pyridoxine 5'-phosphate from D-erythrose 4-phosphate: step 2/5. Catalyzes the oxidation of erythronate-4-phosphate to 3-hydroxy-2-oxo-4-phosphonooxybutanoate. This chain is Erythronate-4-phosphate dehydrogenase, found in Escherichia coli O139:H28 (strain E24377A / ETEC).